A 479-amino-acid polypeptide reads, in one-letter code: Cruciferin PGCRURSE5 (479 aa).

Residues 1–23 (MVKLAHLLVATFGVLLVLNGCLA) form the signal peptide. 2 cysteine pairs are disulfide-bonded: cysteine 37–cysteine 70 and cysteine 113–cysteine 296. One can recognise a Cupin type-1 1 domain in the interval 42 to 241 (LDVLQPTETI…ALKMQLRLAQ (200 aa)). The residue at position 116 (threonine 116) is a Phosphothreonine. Disordered stretches follow at residues 117–144 (FMDS…GFRD), 196–219 (RTFR…QQQN), and 271–291 (YESE…DNGL). A compositionally biased stretch (low complexity) spans 124-141 (QGQGQQGQQGQQGQQQQG). The 150-residue stretch at 302–451 (ENIDDPARAD…AFQISLEEAR (150 aa)) folds into the Cupin type-1 2 domain. 2 positions are modified to phosphothreonine: threonine 415 and threonine 440.

This sequence belongs to the 11S seed storage protein (globulins) family. Hexamer; each subunit is composed of an acidic and a basic chain derived from a single precursor and linked by a disulfide bond.

Functionally, this is a seed storage protein. The chain is Cruciferin PGCRURSE5 (CRURS) from Raphanus sativus (Radish).